The chain runs to 305 residues: Sulfate adenylyltransferase subunit 2 (305 aa).

It belongs to the PAPS reductase family. CysD subfamily. In terms of assembly, heterodimer composed of CysD, the smaller subunit, and CysN.

The enzyme catalyses sulfate + ATP + H(+) = adenosine 5'-phosphosulfate + diphosphate. It participates in sulfur metabolism; hydrogen sulfide biosynthesis; sulfite from sulfate: step 1/3. Functionally, with CysN forms the ATP sulfurylase (ATPS) that catalyzes the adenylation of sulfate producing adenosine 5'-phosphosulfate (APS) and diphosphate, the first enzymatic step in sulfur assimilation pathway. APS synthesis involves the formation of a high-energy phosphoric-sulfuric acid anhydride bond driven by GTP hydrolysis by CysN coupled to ATP hydrolysis by CysD. This is Sulfate adenylyltransferase subunit 2 from Pseudomonas fluorescens (strain ATCC BAA-477 / NRRL B-23932 / Pf-5).